The sequence spans 384 residues: Glucose-fructose oxidoreductase domain-containing protein 2 (384 aa).

A signal peptide spans 1-25; the sequence is MKTLPGIGVFGTGNTARVLISLLRA. Residues 358–384 are disordered; it reads GEWESVELTNDETDSNQNLSEVIQHNL. A compositionally biased stretch (polar residues) spans 372–384; it reads SNQNLSEVIQHNL.

This sequence belongs to the Gfo/Idh/MocA family.

It is found in the secreted. Its subcellular location is the extracellular space. It localises to the extracellular matrix. In terms of biological role, promotes matrix assembly. The protein is Glucose-fructose oxidoreductase domain-containing protein 2 (gfod2) of Xenopus tropicalis (Western clawed frog).